We begin with the raw amino-acid sequence, 846 residues long: Disks large-associated protein 5 (846 aa).

Ser67 is subject to Phosphoserine; by CDK1. The stretch at 90–120 (RKQMLQKYKEEKQLQKLKEQREKAKRGIFKV) forms a coiled coil. Residues 153-284 (TRSKAKDQME…TNATSGMNPD (132 aa)) form a disordered region. 2 stretches are compositionally biased toward basic and acidic residues: residues 156–174 (KAKDQMEQTKIDNESDVRA) and 182–194 (TSEKKVSDKEKKV). Ser202 is modified (phosphoserine). The segment covering 203 to 225 (LRMTRSATQAAKQVPRTVSSTTA) has biased composition (polar residues). Basic and acidic residues predominate over residues 250–266 (KNVETKPDKGISCKVDS). Polar residues predominate over residues 269 to 281 (NTLNSQTNATSGM). Residue Thr326 is modified to Phosphothreonine. Residue Thr329 is modified to Phosphothreonine; by CDK1. Thr338 carries the post-translational modification Phosphothreonine. Lys347 participates in a covalent cross-link: Glycyl lysine isopeptide (Lys-Gly) (interchain with G-Cter in SUMO2). Residues Thr401 and Thr402 each carry the phosphothreonine; by CDK1 modification. A Phosphoserine; by CDK1 modification is found at Ser618. Ser627 carries the phosphoserine; by AURKA modification. A compositionally biased stretch (polar residues) spans 628–671 (VSSEGPSQRLGTPKSVNKAVSQSRNEMGIPQQTTSPENAGPQNT). A disordered region spans residues 628-674 (VSSEGPSQRLGTPKSVNKAVSQSRNEMGIPQQTTSPENAGPQNTKSE). 2 positions are modified to phosphoserine: Ser629 and Ser634. At Thr639 the chain carries Phosphothreonine; by CDK1. The residue at position 642 (Ser642) is a Phosphoserine; by CDK1. Phosphoserine is present on Ser662. Ser725 and Ser757 each carry phosphoserine; by AURKA. Phosphothreonine; by CDK1 is present on Thr759. Residues Ser774 and Ser777 each carry the phosphoserine modification. Phosphothreonine is present on Thr784. 2 positions are modified to phosphoserine: Ser806 and Ser812. Residue Ser830 is modified to Phosphoserine; by AURKA. At Ser839 the chain carries Phosphoserine; by CDK1.

Belongs to the SAPAP family. In terms of assembly, interacts with CDK1. Interacts with the C-terminal proline-rich region of FBXO7. Recruited by FBXO7 to a SCF (SKP1-CUL1-F-box) protein complex in a CDK1/Cyclin B-phosphorylation dependent manner. Interacts with CDH1. Post-translationally, ubiquitinated, leading to its degradation. In terms of processing, decreased phosphorylation levels are associated with the differentiation of intestinal epithelial cells. Abundantly expressed in fetal liver. Expressed at lower levels in bone marrow, testis, colon, and placenta.

It localises to the nucleus. The protein resides in the cytoplasm. Its subcellular location is the cytoskeleton. The protein localises to the spindle. In terms of biological role, potential cell cycle regulator that may play a role in carcinogenesis of cancer cells. Mitotic phosphoprotein regulated by the ubiquitin-proteasome pathway. Key regulator of adherens junction integrity and differentiation that may be involved in CDH1-mediated adhesion and signaling in epithelial cells. The sequence is that of Disks large-associated protein 5 (DLGAP5) from Homo sapiens (Human).